The sequence spans 172 residues: Probable phosphatase YqeG (172 aa).

Its function is as follows. Has low dephosphorylation activity on GMP and glucose-6-phosphate. In Bacillus subtilis (strain 168), this protein is Probable phosphatase YqeG (yqeG).